The chain runs to 317 residues: MAPSSSSGLTFKLHPLVIVNISDHYTRVKTQLNPPASICASGHGSNNGEAMFQQNPRVYGCVIGVQRGRTVEIFNSFELLYDPSTQTLDRSFLEKKQELYKKVFPDFYILGWYSTGSDAEESDMHIHKALMDINESPVYVLLNPAINHTQKDLPVTIYESELHVIDGIPQLIFAHTSYTIETVEAERISVDHVAHLKPSDGGSAATQLAAHLTGIHSAIKMLNSRIRVLYQNLAAMQKGDKSCDNSVLRQVSSLLRRLPAMESERFQDNFLMEYNDKLLITYLAMITNCSSNMNEMVDKFNTAYDRNTRRGGRTAFM.

Positions 30–164 constitute an MPN domain; it reads TQLNPPASIC…VTIYESELHV (135 aa).

It belongs to the peptidase M67A family. CSN6 subfamily. Component of the CSN complex, probably composed of CSN1, CSN2, CSN3, CSN4, CSN5 (CSN5A or CSN5B), CSN6 (CSN6A or CSN6B), CSN7 and CSN8. Interacts with itself. In the complex, it probably interacts directly with CSN4 and CSN5A or CSN5B. Interacts with CSN7 (via C-terminal tail). Binds to the translation initiation factors TIF3E1.

Its subcellular location is the cytoplasm. It localises to the nucleus. Component of the COP9 signalosome complex (CSN), a complex involved in various cellular and developmental processes such as photomorphogenesis and auxin and jasmonate responses. The CSN complex is an essential regulator of the ubiquitin (Ubl) conjugation pathway by mediating the deneddylation of the cullin subunits of SCF-type E3 ligase complexes, leading to decrease the Ubl ligase activity of SCF. It is involved in repression of photomorphogenesis in darkness by regulating the activity of COP1-containing Ubl ligase complexes. The complex is also required for degradation of PSIAA6 by regulating the activity of the Ubl ligase SCF-TIR complex. Essential for the structural integrity of the CSN holocomplex. In Arabidopsis thaliana (Mouse-ear cress), this protein is COP9 signalosome complex subunit 6a.